Here is a 247-residue protein sequence, read N- to C-terminus: Type III pantothenate kinase (247 aa).

7–14 (AIGNSRWH) serves as a coordination point for ATP. Substrate contacts are provided by residues Y91 and 95–98 (GLDR). D97 acts as the Proton acceptor in catalysis. D117 contacts K(+). T120 lines the ATP pocket. Substrate is bound at residue T172.

This sequence belongs to the type III pantothenate kinase family. In terms of assembly, homodimer. NH4(+) serves as cofactor. Requires K(+) as cofactor.

It is found in the cytoplasm. It catalyses the reaction (R)-pantothenate + ATP = (R)-4'-phosphopantothenate + ADP + H(+). Its pathway is cofactor biosynthesis; coenzyme A biosynthesis; CoA from (R)-pantothenate: step 1/5. Catalyzes the phosphorylation of pantothenate (Pan), the first step in CoA biosynthesis. This is Type III pantothenate kinase from Synechococcus elongatus (strain ATCC 33912 / PCC 7942 / FACHB-805) (Anacystis nidulans R2).